The sequence spans 350 residues: Protein YIPF3 (350 aa).

A compositionally biased stretch (low complexity) spans 1 to 10; the sequence is MATTAAPAGG. The disordered stretch occupies residues 1–51; that stretch reads MATTAAPAGGARNGAGPEWGGFEENIQGGGSAVIDMENMDDTSGSSFEDMG. At alanine 2 the chain carries N-acetylalanine. At 2-148 the chain is on the cytoplasmic side; the sequence is ATTAAPAGGA…PIKMVNFPQK (147 aa). The chain crosses the membrane as a helical span at residues 149 to 169; sequence IAGELYGPLMLVFTLVAILLH. At 170 to 187 the chain is on the lumenal side; sequence GMKTSDTIIREGTLMGTA. The chain crosses the membrane as a helical span at residues 188–208; that stretch reads IGTCFGYWLGVSSFIYFLAYL. At 209-214 the chain is on the cytoplasmic side; sequence CNAQIT. A helical membrane pass occupies residues 215–237; that stretch reads MLQMLALLGYGLFGHCIVLFITY. The Lumenal segment spans residues 238–240; the sequence is NIH. Residues 241–263 form a helical membrane-spanning segment; sequence LHALFYLFWLLVGGLSTLRMVAV. Topologically, residues 264 to 274 are cytoplasmic; the sequence is LVSRTVGPTQR. Residues 275–295 form a helical membrane-spanning segment; sequence LLLCGTLAALHMLFLLYLHFA. Over 296–350 the chain is Lumenal; sequence YHKVVEGILDTLEGPNIPPIQRVPRDIPAMLPAARLPTTVLNATAKAVAVTLQSH. Residues threonine 333 and threonine 334 are each glycosylated (O-linked (GalNAc...) threonine). N-linked (GlcNAc...) asparagine glycosylation is present at asparagine 337. Threonine 339 and threonine 346 each carry an O-linked (GalNAc...) threonine glycan.

The protein belongs to the YIP1 family. As to quaternary structure, interacts with YIPF4 and YIPF5. In terms of processing, N-glycosylated in the ER (40 kDa form I), then O-glycosylated in the Golgi apparatus (46 kDa form II), the C-terminal lumenal region is later removed in the Golgi apparatus to produce a 36 kDa form III. O-glycosylated with core 1-like and core 2-like glycans. O-glycan heterogeneity at Thr-346: HexNAc (minor), HexHexNAc (major), Hex1HexNAc2 (minor), Hex2HexNAc2 (minor) and dHex1Hex2HexNAc2 (minor). Expressed by nucleated hematopoietic cells (at protein level).

The protein localises to the cell membrane. It localises to the cytoplasm. Its subcellular location is the golgi apparatus. It is found in the cis-Golgi network membrane. Functionally, involved in the maintenance of the Golgi structure. May play a role in hematopoiesis. The chain is Protein YIPF3 (YIPF3) from Homo sapiens (Human).